The primary structure comprises 470 residues: Neuraminidase (470 aa).

At 1 to 6 (MNPNQK) the chain is on the intravirion side. A helical transmembrane segment spans residues 7–27 (IITIGSISIAIGIISLMLQIG). The segment at 11 to 33 (GSISIAIGIISLMLQIGNIISIW) is involved in apical transport and lipid raft association. The Virion surface segment spans residues 28–470 (NIISIWASHS…GAELPFTIDK (443 aa)). Residues 36-90 (HSIQTGSQNHTGICNQRIITYENSTWVNHTYVNINNTNVVAGKDKTSVTLAGNSS) are hypervariable stalk region. 5 N-linked (GlcNAc...) asparagine; by host glycosylation sites follow: N44, N58, N63, N70, and N88. The head of neuraminidase stretch occupies residues 91–470 (LCSISGWAIY…GAELPFTIDK (380 aa)). 8 disulfides stabilise this stretch: C92–C417, C124–C129, C184–C231, C233–C238, C279–C292, C281–C290, C318–C335, and C421–C447. R118 provides a ligand contact to substrate. N146 is a glycosylation site (N-linked (GlcNAc...) asparagine; by host). Catalysis depends on D151, which acts as the Proton donor/acceptor. Substrate is bound at residue R152. A glycan (N-linked (GlcNAc...) asparagine; by host) is linked at N235. A substrate-binding site is contributed by 277–278 (EE). R293 provides a ligand contact to substrate. Ca(2+) contacts are provided by D294, G298, and D324. R368 lines the substrate pocket. Residue Y402 is the Nucleophile of the active site. N434 and N455 each carry an N-linked (GlcNAc...) asparagine; by host glycan.

It belongs to the glycosyl hydrolase 34 family. As to quaternary structure, homotetramer. The cofactor is Ca(2+). N-glycosylated.

The protein localises to the virion membrane. It is found in the host apical cell membrane. It catalyses the reaction Hydrolysis of alpha-(2-&gt;3)-, alpha-(2-&gt;6)-, alpha-(2-&gt;8)- glycosidic linkages of terminal sialic acid residues in oligosaccharides, glycoproteins, glycolipids, colominic acid and synthetic substrates.. Inhibited by the neuraminidase inhibitors zanamivir (Relenza) and oseltamivir (Tamiflu). These drugs interfere with the release of progeny virus from infected cells and are effective against all influenza strains. Resistance to neuraminidase inhibitors is quite rare. Catalyzes the removal of terminal sialic acid residues from viral and cellular glycoconjugates. Cleaves off the terminal sialic acids on the glycosylated HA during virus budding to facilitate virus release. Additionally helps virus spread through the circulation by further removing sialic acids from the cell surface. These cleavages prevent self-aggregation and ensure the efficient spread of the progeny virus from cell to cell. Otherwise, infection would be limited to one round of replication. Described as a receptor-destroying enzyme because it cleaves a terminal sialic acid from the cellular receptors. May facilitate viral invasion of the upper airways by cleaving the sialic acid moieties on the mucin of the airway epithelial cells. Likely to plays a role in the budding process through its association with lipid rafts during intracellular transport. May additionally display a raft-association independent effect on budding. Plays a role in the determination of host range restriction on replication and virulence. Sialidase activity in late endosome/lysosome traffic seems to enhance virus replication. The sequence is that of Neuraminidase from Influenza A virus (strain A/Russia:St.Petersburg/8/2006 H1N1).